A 153-amino-acid polypeptide reads, in one-letter code: Endoribonuclease YbeY (153 aa).

H118, H122, and H128 together coordinate Zn(2+).

Belongs to the endoribonuclease YbeY family. Zn(2+) is required as a cofactor.

It is found in the cytoplasm. Functionally, single strand-specific metallo-endoribonuclease involved in late-stage 70S ribosome quality control and in maturation of the 3' terminus of the 16S rRNA. This is Endoribonuclease YbeY from Staphylococcus saprophyticus subsp. saprophyticus (strain ATCC 15305 / DSM 20229 / NCIMB 8711 / NCTC 7292 / S-41).